The sequence spans 346 residues: Tetraacyldisaccharide 4'-kinase (346 aa).

54–61 (TVGGAGKT) lines the ATP pocket.

It belongs to the LpxK family.

It catalyses the reaction a lipid A disaccharide + ATP = a lipid IVA + ADP + H(+). It functions in the pathway glycolipid biosynthesis; lipid IV(A) biosynthesis; lipid IV(A) from (3R)-3-hydroxytetradecanoyl-[acyl-carrier-protein] and UDP-N-acetyl-alpha-D-glucosamine: step 6/6. Functionally, transfers the gamma-phosphate of ATP to the 4'-position of a tetraacyldisaccharide 1-phosphate intermediate (termed DS-1-P) to form tetraacyldisaccharide 1,4'-bis-phosphate (lipid IVA). This is Tetraacyldisaccharide 4'-kinase from Sinorhizobium medicae (strain WSM419) (Ensifer medicae).